Consider the following 435-residue polypeptide: Eukaryotic translation initiation factor 3 subunit E (435 aa).

One can recognise a PCI domain in the interval 241-409; the sequence is TDMFFSPSYI…GTVIMNHPPQ (169 aa).

Belongs to the eIF-3 subunit E family. In terms of assembly, component of the eukaryotic translation initiation factor 3 (eIF-3) complex.

The protein resides in the cytoplasm. Component of the eukaryotic translation initiation factor 3 (eIF-3) complex, which is involved in protein synthesis of a specialized repertoire of mRNAs and, together with other initiation factors, stimulates binding of mRNA and methionyl-tRNAi to the 40S ribosome. The eIF-3 complex specifically targets and initiates translation of a subset of mRNAs involved in cell proliferation. This Phaeosphaeria nodorum (strain SN15 / ATCC MYA-4574 / FGSC 10173) (Glume blotch fungus) protein is Eukaryotic translation initiation factor 3 subunit E.